Consider the following 665-residue polypeptide: UvrABC system protein C (665 aa).

The GIY-YIG domain occupies 16–95; it reads ESPGVYRFRD…IKQYDPRFNV (80 aa). The 36-residue stretch at 208 to 243 folds into the UVR domain; that stretch reads DLMVRRLEREMADASAELEFERAARLRDDLAALRRA. Positions 470–507 are disordered; the sequence is EAGVESAGDPATPAGPASTGPGVPDEPRVGTLVDPTTG. Over residues 475–491 the composition is skewed to low complexity; that stretch reads SAGDPATPAGPASTGPG.

This sequence belongs to the UvrC family. Interacts with UvrB in an incision complex.

The protein resides in the cytoplasm. Its function is as follows. The UvrABC repair system catalyzes the recognition and processing of DNA lesions. UvrC both incises the 5' and 3' sides of the lesion. The N-terminal half is responsible for the 3' incision and the C-terminal half is responsible for the 5' incision. This is UvrABC system protein C from Salinispora tropica (strain ATCC BAA-916 / DSM 44818 / JCM 13857 / NBRC 105044 / CNB-440).